Consider the following 270-residue polypeptide: ATP synthase subunit a (270 aa).

Transmembrane regions (helical) follow at residues 37-57 (NVHI…LGVF), 98-118 (IAPL…MDLV), 143-163 (DVNI…YYSI), 208-228 (LFGN…MLPW), and 239-259 (AIFH…LTIV).

This sequence belongs to the ATPase A chain family. As to quaternary structure, F-type ATPases have 2 components, CF(1) - the catalytic core - and CF(0) - the membrane proton channel. CF(1) has five subunits: alpha(3), beta(3), gamma(1), delta(1), epsilon(1). CF(0) has three main subunits: a(1), b(2) and c(9-12). The alpha and beta chains form an alternating ring which encloses part of the gamma chain. CF(1) is attached to CF(0) by a central stalk formed by the gamma and epsilon chains, while a peripheral stalk is formed by the delta and b chains.

It localises to the cell inner membrane. Functionally, key component of the proton channel; it plays a direct role in the translocation of protons across the membrane. In Vibrio cholerae serotype O1 (strain ATCC 39315 / El Tor Inaba N16961), this protein is ATP synthase subunit a.